A 337-amino-acid polypeptide reads, in one-letter code: Mating-type protein MAT-2 (337 aa).

Residues 125–193 (APRPMNCWII…EHLRQHPNYK (69 aa)) constitute a DNA-binding region (HMG box). The segment at 171-219 (KRPWQDAAQSAKEEHLRQHPNYKYTPRKPGEKKKRQSRKSKRAAATTTA) is disordered. Basic residues predominate over residues 200-212 (GEKKKRQSRKSKR).

Its subcellular location is the nucleus. This is Mating-type protein MAT-2 (MAT2) from Cochliobolus sativus (Common root rot and spot blotch fungus).